A 302-amino-acid polypeptide reads, in one-letter code: Glutamyl-Q tRNA(Asp) synthetase (302 aa).

L-glutamate is bound by residues 13 to 17 and D49; that span reads RFAPS. Positions 16–26 match the 'HIGH' region motif; that stretch reads PSPTGPLHLGS. The Zn(2+) site is built by C105, C107, Y119, and C123. L-glutamate contacts are provided by Y178 and R196. The 'KMSKS' region motif lies at 234–238; the sequence is KLSKQ. K237 contributes to the ATP binding site.

The protein belongs to the class-I aminoacyl-tRNA synthetase family. GluQ subfamily. Zn(2+) serves as cofactor.

In terms of biological role, catalyzes the tRNA-independent activation of glutamate in presence of ATP and the subsequent transfer of glutamate onto a tRNA(Asp). Glutamate is transferred on the 2-amino-5-(4,5-dihydroxy-2-cyclopenten-1-yl) moiety of the queuosine in the wobble position of the QUC anticodon. This Methylococcus capsulatus (strain ATCC 33009 / NCIMB 11132 / Bath) protein is Glutamyl-Q tRNA(Asp) synthetase.